Reading from the N-terminus, the 251-residue chain is CDP-diacylglycerol pyrophosphatase (251 aa).

Residues 4–24 (AGLLFLVMIVIAVVAAGIGYW) form a helical membrane-spanning segment.

Belongs to the Cdh family.

The protein resides in the cell inner membrane. The catalysed reaction is a CDP-1,2-diacyl-sn-glycerol + H2O = a 1,2-diacyl-sn-glycero-3-phosphate + CMP + 2 H(+). The protein operates within phospholipid metabolism; CDP-diacylglycerol degradation; phosphatidate from CDP-diacylglycerol: step 1/1. The sequence is that of CDP-diacylglycerol pyrophosphatase from Escherichia coli O127:H6 (strain E2348/69 / EPEC).